We begin with the raw amino-acid sequence, 380 residues long: Queuine tRNA-ribosyltransferase (380 aa).

Aspartate 96 acts as the Proton acceptor in catalysis. Substrate-binding positions include 96–100 (DSGGF), aspartate 150, glutamine 193, and glycine 220. Residues 251–257 (GVGAPDS) form an RNA binding region. Aspartate 270 acts as the Nucleophile in catalysis. An RNA binding; important for wobble base 34 recognition region spans residues 275 to 279 (TRIAR). Residues cysteine 308, cysteine 310, cysteine 313, and histidine 339 each contribute to the Zn(2+) site.

This sequence belongs to the queuine tRNA-ribosyltransferase family. In terms of assembly, homodimer. Within each dimer, one monomer is responsible for RNA recognition and catalysis, while the other monomer binds to the replacement base PreQ1. Requires Zn(2+) as cofactor.

The catalysed reaction is 7-aminomethyl-7-carbaguanine + guanosine(34) in tRNA = 7-aminomethyl-7-carbaguanosine(34) in tRNA + guanine. It functions in the pathway tRNA modification; tRNA-queuosine biosynthesis. In terms of biological role, catalyzes the base-exchange of a guanine (G) residue with the queuine precursor 7-aminomethyl-7-deazaguanine (PreQ1) at position 34 (anticodon wobble position) in tRNAs with GU(N) anticodons (tRNA-Asp, -Asn, -His and -Tyr). Catalysis occurs through a double-displacement mechanism. The nucleophile active site attacks the C1' of nucleotide 34 to detach the guanine base from the RNA, forming a covalent enzyme-RNA intermediate. The proton acceptor active site deprotonates the incoming PreQ1, allowing a nucleophilic attack on the C1' of the ribose to form the product. After dissociation, two additional enzymatic reactions on the tRNA convert PreQ1 to queuine (Q), resulting in the hypermodified nucleoside queuosine (7-(((4,5-cis-dihydroxy-2-cyclopenten-1-yl)amino)methyl)-7-deazaguanosine). This is Queuine tRNA-ribosyltransferase from Streptococcus pyogenes serotype M49 (strain NZ131).